We begin with the raw amino-acid sequence, 355 residues long: Histidinol-phosphate aminotransferase (355 aa).

The residue at position 218 (K218) is an N6-(pyridoxal phosphate)lysine.

Belongs to the class-II pyridoxal-phosphate-dependent aminotransferase family. Histidinol-phosphate aminotransferase subfamily. As to quaternary structure, homodimer. The cofactor is pyridoxal 5'-phosphate.

It catalyses the reaction L-histidinol phosphate + 2-oxoglutarate = 3-(imidazol-4-yl)-2-oxopropyl phosphate + L-glutamate. The protein operates within amino-acid biosynthesis; L-histidine biosynthesis; L-histidine from 5-phospho-alpha-D-ribose 1-diphosphate: step 7/9. This is Histidinol-phosphate aminotransferase from Chlorobaculum parvum (strain DSM 263 / NCIMB 8327) (Chlorobium vibrioforme subsp. thiosulfatophilum).